Here is a 314-residue protein sequence, read N- to C-terminus: Olfactory receptor 5D13 (314 aa).

Over 1-27 (MMASERNQSSTPTFILLGFSEYPEIQV) the chain is Extracellular. The N-linked (GlcNAc...) asparagine glycan is linked to Asn7. The chain crosses the membrane as a helical span at residues 28 to 48 (PLFLVFLFVYTVTVVGNLGMI). Residues 49-56 (IIIRLNSK) lie on the Cytoplasmic side of the membrane. A helical membrane pass occupies residues 57 to 77 (LHTIMCFFLSHLSLTDFCFST). The Extracellular segment spans residues 78-101 (VVTPKLLENLVVEYRTISFSGCIM). A helical membrane pass occupies residues 102 to 122 (QFCFACIFGVTETFMLAAMAY). Topologically, residues 123 to 141 (DRFVAVCKPLLYTTIMSQK) are cytoplasmic. Residues 142–162 (LCALLVAGSYTWGIVCSLILT) form a helical membrane-spanning segment. Residues 163-198 (YFLLDLSFCESTFINNFICDHSVIVSASYSDPYISQ) lie on the Extracellular side of the membrane. The chain crosses the membrane as a helical span at residues 199–219 (RLCFIIAIFNEVSSLIIILTS). The Cytoplasmic segment spans residues 220 to 239 (YMLIFTTIMKMRSASGRQKT). The chain crosses the membrane as a helical span at residues 240-260 (FSTCASHLTAITIFHGTILFL). Residues 261-273 (YCVPNPKTSSLIV) lie on the Extracellular side of the membrane. A helical transmembrane segment spans residues 274–294 (TVASVFYTVAIPMLNPLIYSL). Residues 295–314 (RNKDINNMFEKLVVTKLIYH) are Cytoplasmic-facing.

The protein belongs to the G-protein coupled receptor 1 family.

Its subcellular location is the cell membrane. In terms of biological role, odorant receptor. The polypeptide is Olfactory receptor 5D13 (OR5D13) (Homo sapiens (Human)).